The following is a 1038-amino-acid chain: Type I restriction enzyme EcoR124I/EcoR124II endonuclease subunit (1038 aa).

Residues 31-249 (QSESDLEREL…LKDFTATCFQ (219 aa)) are nuclease domain. Residues 250–469 (KHTLLNVLVN…SYVITDAIRD (220 aa)) are motor 1 domain. Residues 294 to 439 (KNWSKPESGG…YQFGFTGTPI (146 aa)) enclose the Helicase ATP-binding domain. 307–314 (HTTGSGKT) is a binding site for ATP. The short motif at 408–411 (DECH) is the DEAH box element. The interval 470-702 (EKVLKFKVDY…YDATKTFGNI (233 aa)) is motor 2 domain. A motor 2-helicase linker region spans residues 720–732 (GDKNTKNVVLEKS). A helicase domain region spans residues 732 to 860 (SYTEYMEGFT…NDIRDWQRRE (129 aa)). The helicase-CTD linker stretch occupies residues 859-886 (REKEAEKKEKSTTDWDDVVFEVDLLKSQ). Residues 886 to 1038 (QEINLDYILG…EKFKGVGGKI (153 aa)) form a C-terminal domain region.

Belongs to the HsdR family. A monomer in solution. The type I restriction/modification system is composed of three polypeptides R, M and S; the restriction enzyme has stoichiometry R(2)M(2)S(1) while the methyltransferase is M(2)S(1). There is an equilibrium between R(2)M(2)S(1) and R(1)M(2)S(1); the latter is methylation and translocation proficient but restriction deficient. In terms of assembly, (Microbial infection) Holoenenzyme interacts with Escherichia phage T7 protein Ocr; this interaction leads to the inhibition of the restriction activity, but may still allow methylation and translocation.

It catalyses the reaction Endonucleolytic cleavage of DNA to give random double-stranded fragments with terminal 5'-phosphates, ATP is simultaneously hydrolyzed.. Its function is as follows. The restriction (R) subunit of a type I restriction enzyme that recognizes 5'-GAAN(6)RTCG-3' (for EcoR124I) and 5'-GAAN(7)RTCG-3' (for EcoR124II) and cleaves a random distance away. Subunit R is required for both nuclease and ATPase activities, but not for modification. After locating an unmethylated recognition site, the enzyme complex serves as a molecular motor that translocates DNA in an ATP-dependent manner until a collision occurs that triggers cleavage. The enzyme undergoes major structural changes to bring the motor domains into contact with DNA, allowing DNA translocation. This prevents DNA access to the catalytic domains of both the R and M subunits, preventing both restriction and methylation. The R(1)M(2)S(1) complex translocates an average of 555 bp/second on nicked DNA; the R(2)M(2)S(1) complex translocates at double that speed. The 2 R subunit motors are independent and track along the helical pitch of the DNA, inducing positive supercoiling ahead of themselves. This Escherichia coli protein is Type I restriction enzyme EcoR124I/EcoR124II endonuclease subunit.